The following is a 240-amino-acid chain: Pyridoxine 5'-phosphate synthase (240 aa).

Asn6 contributes to the 3-amino-2-oxopropyl phosphate binding site. Position 8–9 (Asp8–His9) interacts with 1-deoxy-D-xylulose 5-phosphate. Arg17 is a binding site for 3-amino-2-oxopropyl phosphate. The Proton acceptor role is filled by His42. Residues Arg44 and His49 each contribute to the 1-deoxy-D-xylulose 5-phosphate site. Glu69 serves as the catalytic Proton acceptor. A 1-deoxy-D-xylulose 5-phosphate-binding site is contributed by Thr99. The active-site Proton donor is the His193. 3-amino-2-oxopropyl phosphate contacts are provided by residues Gly194 and Gly216 to His217.

Belongs to the PNP synthase family. Homooctamer; tetramer of dimers.

It is found in the cytoplasm. It catalyses the reaction 3-amino-2-oxopropyl phosphate + 1-deoxy-D-xylulose 5-phosphate = pyridoxine 5'-phosphate + phosphate + 2 H2O + H(+). The protein operates within cofactor biosynthesis; pyridoxine 5'-phosphate biosynthesis; pyridoxine 5'-phosphate from D-erythrose 4-phosphate: step 5/5. Catalyzes the complicated ring closure reaction between the two acyclic compounds 1-deoxy-D-xylulose-5-phosphate (DXP) and 3-amino-2-oxopropyl phosphate (1-amino-acetone-3-phosphate or AAP) to form pyridoxine 5'-phosphate (PNP) and inorganic phosphate. The protein is Pyridoxine 5'-phosphate synthase of Hydrogenobaculum sp. (strain Y04AAS1).